The chain runs to 397 residues: 1-deoxy-D-xylulose 5-phosphate reductoisomerase (397 aa).

Positions 12, 13, 14, 15, 38, 39, 40, and 126 each coordinate NADPH. K127 contributes to the 1-deoxy-D-xylulose 5-phosphate binding site. E128 is an NADPH binding site. Position 152 (D152) interacts with Mn(2+). 1-deoxy-D-xylulose 5-phosphate is bound by residues S153, E154, S188, and H211. E154 contributes to the Mn(2+) binding site. Position 217 (G217) interacts with NADPH. Residues S224, N229, K230, and E233 each contribute to the 1-deoxy-D-xylulose 5-phosphate site. E233 provides a ligand contact to Mn(2+).

The protein belongs to the DXR family. Mg(2+) is required as a cofactor. Requires Mn(2+) as cofactor.

It catalyses the reaction 2-C-methyl-D-erythritol 4-phosphate + NADP(+) = 1-deoxy-D-xylulose 5-phosphate + NADPH + H(+). Its pathway is isoprenoid biosynthesis; isopentenyl diphosphate biosynthesis via DXP pathway; isopentenyl diphosphate from 1-deoxy-D-xylulose 5-phosphate: step 1/6. Catalyzes the NADPH-dependent rearrangement and reduction of 1-deoxy-D-xylulose-5-phosphate (DXP) to 2-C-methyl-D-erythritol 4-phosphate (MEP). This Haemophilus influenzae (strain ATCC 51907 / DSM 11121 / KW20 / Rd) protein is 1-deoxy-D-xylulose 5-phosphate reductoisomerase.